A 99-amino-acid chain; its full sequence is Integration host factor subunit alpha (99 aa).

This sequence belongs to the bacterial histone-like protein family. In terms of assembly, heterodimer of an alpha and a beta chain.

Functionally, this protein is one of the two subunits of integration host factor, a specific DNA-binding protein that functions in genetic recombination as well as in transcriptional and translational control. The sequence is that of Integration host factor subunit alpha from Xylella fastidiosa (strain M12).